The primary structure comprises 216 residues: Small ribosomal subunit protein uS3c (216 aa).

The region spanning 43–118 (INNYVKKNMR…KLNITITRIE (76 aa)) is the KH type-2 domain.

Belongs to the universal ribosomal protein uS3 family. In terms of assembly, part of the 30S ribosomal subunit.

Its subcellular location is the plastid. In Cuscuta reflexa (Southern Asian dodder), this protein is Small ribosomal subunit protein uS3c (rps3).